A 502-amino-acid polypeptide reads, in one-letter code: Lysine--tRNA ligase (502 aa).

Residues E409 and E416 each contribute to the Mg(2+) site.

The protein belongs to the class-II aminoacyl-tRNA synthetase family. Homodimer. Mg(2+) is required as a cofactor.

Its subcellular location is the cytoplasm. It catalyses the reaction tRNA(Lys) + L-lysine + ATP = L-lysyl-tRNA(Lys) + AMP + diphosphate. This is Lysine--tRNA ligase from Shouchella clausii (strain KSM-K16) (Alkalihalobacillus clausii).